Consider the following 470-residue polypeptide: FAD-dependent monooxygenase dpchE (470 aa).

The signal sequence occupies residues methionine 1–leucine 24. FAD is bound by residues glutamate 35, glycine 49, and arginine 108. N-linked (GlcNAc...) asparagine glycosylation is present at asparagine 128. Arginine 193 is a catalytic residue. Residues aspartate 312 and alanine 325 each coordinate FAD. A helical membrane pass occupies residues tryptophan 447–leucine 463.

It belongs to the paxM FAD-dependent monooxygenase family. FAD is required as a cofactor.

The protein resides in the membrane. It functions in the pathway secondary metabolite biosynthesis; terpenoid biosynthesis. In terms of biological role, FAD-dependent monooxygenase; part of the gene cluster that mediates the biosynthesis of the diterpenoid pyrones higginsianins A and B. The first step of the pathway is the synthesis of the alpha-pyrone moiety by the polyketide synthase dpchA via condensation of one acetyl-CoA starter unit with 3 malonyl-CoA units and 2 methylations. The alpha-pyrone is then combined with geranylgeranyl pyrophosphate (GGPP) formed by the GGPP synthase dpchD through the action of the prenyltransferase dpchC to yield a linear alpha-pyrone diterpenoid. Subsequent steps in the diterpenoid pyrone biosynthetic pathway involve the decalin core formation, which is initiated by the epoxidation of the C10-C11 olefin by the FAD-dependent oxidoreductase dpchE, and is followed by a cyclization cascade catalyzed by the terpene cyclase dpchB. The short chain dehydrogenase/reductase dpchG then oxidizes the 8S hydroxy group to a ketone and the short chain dehydrogenase/reductase dpchH reduces the ketone to the 8R hydroxy group to yield higginsianin B. Finally, the FAD-dependent oxidoreductase dpchF converts higginsianin B into higginsianin A. The protein is FAD-dependent monooxygenase dpchE of Colletotrichum higginsianum (strain IMI 349063) (Crucifer anthracnose fungus).